The following is a 578-amino-acid chain: ATP-dependent RNA helicase dbp3 (578 aa).

Basic and acidic residues predominate over residues 59–69; sequence KRSADEEASVK. The segment at 59 to 117 is disordered; the sequence is KRSADEEASVKRKEKKSKHEHKKHKKDKPSADKDRISKKDKKKSKKGKSKTKEESIEIN. Residues 70–85 are compositionally biased toward basic residues; the sequence is RKEKKSKHEHKKHKKD. The segment covering 86 to 95 has biased composition (basic and acidic residues); that stretch reads KPSADKDRIS. The span at 96 to 107 shows a compositional bias: basic residues; sequence KKDKKKSKKGKS. The Q motif motif lies at 167–193; sequence LQFDELDVSAKLREGLKNYKEPTPIQA. Residues 196 to 373 enclose the Helicase ATP-binding domain; it reads WPYLLAGRDV…ATFLKDPVKI (178 aa). An ATP-binding site is contributed by 209–216; the sequence is AETGSGKT. The short motif at 316–319 is the DEAD box element; the sequence is DEAD. The Helicase C-terminal domain maps to 402 to 550; it reads MLDNLLRKHL…DIPEGLFKFG (149 aa).

It belongs to the DEAD box helicase family. DDX5/DBP2 subfamily.

The protein localises to the nucleus. It is found in the nucleolus. The catalysed reaction is ATP + H2O = ADP + phosphate + H(+). Functionally, ATP-dependent RNA helicase required for 60S ribosomal subunit synthesis. Involved in efficient pre-rRNA processing, predominantly at site A3, which is necessary for the normal formation of 25S and 5.8S rRNAs. The polypeptide is ATP-dependent RNA helicase dbp3 (dbp3) (Schizosaccharomyces pombe (strain 972 / ATCC 24843) (Fission yeast)).